The primary structure comprises 77 residues: AKWYPEVRHHCPNTPIILVGTKLDLRDDKDTIEKLKEKKLTPITYPQGLAMAKEIGAVKYLECSALTQRTVFDEAIR.

22 to 24 provides a ligand contact to GTP; the sequence is KLD. Lys53 participates in a covalent cross-link: Glycyl lysine isopeptide (Lys-Gly) (interchain with G-Cter in ubiquitin). 65 to 66 contributes to the GTP binding site; the sequence is AL.

The protein belongs to the small GTPase superfamily. Rho family. As to quaternary structure, interacts with NISCH. Interacts with PIP5K1A. Interacts with the GTP-bound form of RAB7A. Interacts with SRGAP2. Interacts with CYFIP1/SRA-1. Interacts with PLXNB3. Interacts with ARHGDIA; the interaction is induced by SEMA5A, mediated through PLXNB3 and inactivates and stabilizes RAC1. Interacts (GTP-bound form preferentially) with PKN2 (via the REM repeats); the interaction stimulates autophosphorylation and phosphorylation of PKN2. Interacts with the GEF proteins PREX1, RASGRF2, FARP1, FARP2, DOCK1, DOCK2 and DOCK7, which promote the exchange between GDP and GTP, and therefore activate it. Interacts with PARD6A, PARD6B and PARD6G in a GTP-dependent manner. Part of a quaternary complex containing PARD3, some PARD6 protein (PARD6A, PARD6B or PARD6G) and some atypical PKC protein (PRKCI or PRKCZ), which plays a central role in epithelial cell polarization. Found in a trimeric complex composed of DOCK1 and ELMO1, which plays a central role in phagocytosis of apoptotic cells. Interacts with RALBP1 via its effector domain. Interacts with PLXNB1. Part of a complex with MAP2K3, MAP3K3, CCM2 and DEF6. Interacts with BAIAP2, BAIAP2L1 and DEF6. Interacts with Y.pseudotuberculosis YPKA and PLCB2. Interacts with NOXA1. Interacts with ARHGEF2. Interacts with TBC1D2. Interacts with UNKL. Interacts with USP6. Interacts with SPATA13. Interacts with ARHGEF16; mediates activation of RAC1 by EPHA2. Interacts with ITGB4. Interacts with S100A8 and calprotectin (S100A8/9). Interacts with PACSIN2. Interacts (when active) with PPP5C (via TPR repeats); activates PPP5C phosphatase activity and translocates PPP5C to the cell membrane. Interacts with RAPH1 (via Ras associating and PH domains). Interacts with MTSS2 (via IMD domain); this interaction may be important to potentiate PDGF-induced RAC1 activation. Interacts with PAK2. Interacts (GTP-bound form) with SH3RF1 and SH3RF3. Found in a complex with SH3RF1, MAPK8IP1/JIP1, MAP3K11/MLK3, MAP2K7/MKK7 and MAPK8/JNK1. Interacts (both active GTP- or inactive GDP-bound forms) with SH3RF2. Interacts (GTP-bound form preferentially) with CYRIB. Interacts with DOCK4 (via DOCKER domain); functions as a guanine nucleotide exchange factor (GEF) for RAC1. Interacts with GARRE1. Interacts with RAP1GDS1. May interact with ARHGAP36. Interacts with DSG3; the interaction is required for DSG3 translocation to cell-cell junctions, organization of cortical F-actin bundles and actin anchoring at cell-cell junctions. Component of the phagocyte NADPH oxidase complex composed of an obligatory core heterodimer formed by the membrane proteins CYBA and CYBB and the cytosolic regulatory subunits NCF1/p47-phox, NCF2/p67-phox, NCF4/p40-phox and the small GTPase RAC1 or RAC2. Interacts with NCF2. Post-translationally, the N-terminus is blocked. GTP-bound active form is ubiquitinated by HACE1, leading to its degradation by the proteasome.

Its subcellular location is the cytoplasm. The protein resides in the membrane. It localises to the melanosome. It is found in the cell projection. The protein localises to the lamellipodium. Its subcellular location is the dendrite. The protein resides in the synapse. It localises to the nucleus. The enzyme catalyses GTP + H2O = GDP + phosphate + H(+). Its activity is regulated as follows. Regulated by guanine nucleotide exchange factors (GEFs) which promote the exchange of bound GDP for free GTP, GTPase activating proteins (GAPs) which increase the GTP hydrolysis activity, and GDP dissociation inhibitors which inhibit the dissociation of the nucleotide from the GTPase. GTP hydrolysis is stimulated by ARHGAP30. Functionally, plasma membrane-associated small GTPase which cycles between active GTP-bound and inactive GDP-bound states. In its active state, binds to a variety of effector proteins to regulate cellular responses such as secretory processes, phagocytosis of apoptotic cells, epithelial cell polarization, neurons adhesion, migration and differentiation, and growth-factor induced formation of membrane ruffles. Rac1 p21/rho GDI heterodimer is the active component of the cytosolic factor sigma 1, which is involved in stimulation of the NADPH oxidase activity in macrophages. Essential for the SPATA13-mediated regulation of cell migration and adhesion assembly and disassembly. Stimulates PKN2 kinase activity. In concert with RAB7A, plays a role in regulating the formation of RBs (ruffled borders) in osteoclasts. In podocytes, promotes nuclear shuttling of NR3C2; this modulation is required for a proper kidney functioning. Required for atypical chemokine receptor ACKR2-induced LIMK1-PAK1-dependent phosphorylation of cofilin (CFL1) and for up-regulation of ACKR2 from endosomal compartment to cell membrane, increasing its efficiency in chemokine uptake and degradation. In neurons, is involved in dendritic spine formation and synaptic plasticity. In hippocampal neurons, involved in spine morphogenesis and synapse formation, through local activation at synapses by guanine nucleotide exchange factors (GEFs), such as ARHGEF6/ARHGEF7/PIX. In synapses, seems to mediate the regulation of F-actin cluster formation performed by SHANK3. In neurons, plays a crucial role in regulating GABA(A) receptor synaptic stability and hence GABAergic inhibitory synaptic transmission through its role in PAK1 activation and eventually F-actin stabilization. Required for DSG3 translocation to cell-cell junctions, DSG3-mediated organization of cortical F-actin bundles and anchoring of actin at cell junctions; via interaction with DSG3. Subunit of the phagocyte NADPH oxidase complex that mediates the transfer of electrons from cytosolic NADPH to O2 to produce the superoxide anion (O2(-)). In Cavia porcellus (Guinea pig), this protein is Ras-related C3 botulinum toxin substrate 1.